Reading from the N-terminus, the 353-residue chain is Protein-glutamate methylesterase/protein-glutamine glutaminase (353 aa).

One can recognise a Response regulatory domain in the interval R6–E123. 4-aspartylphosphate is present on D57. In terms of domain architecture, CheB-type methylesterase spans A159–R351. Active-site residues include S171, H197, and D293.

Belongs to the CheB family. Post-translationally, phosphorylated by CheA. Phosphorylation of the N-terminal regulatory domain activates the methylesterase activity.

It is found in the cytoplasm. The catalysed reaction is [protein]-L-glutamate 5-O-methyl ester + H2O = L-glutamyl-[protein] + methanol + H(+). It catalyses the reaction L-glutaminyl-[protein] + H2O = L-glutamyl-[protein] + NH4(+). Involved in chemotaxis. Part of a chemotaxis signal transduction system that modulates chemotaxis in response to various stimuli. Catalyzes the demethylation of specific methylglutamate residues introduced into the chemoreceptors (methyl-accepting chemotaxis proteins or MCP) by CheR. Also mediates the irreversible deamidation of specific glutamine residues to glutamic acid. The protein is Protein-glutamate methylesterase/protein-glutamine glutaminase of Syntrophotalea carbinolica (strain DSM 2380 / NBRC 103641 / GraBd1) (Pelobacter carbinolicus).